The chain runs to 291 residues: MAGMKEIRGKIKSVQNTRKITKAMEMVAASKMRRAQERMRAARPYADKVRAIAAHMSRANPEYRHPFMVANDGAQTAGIILVTTDKGLCGGLNTNVLRATVQKFKELEEKGQKVEATAIGGKGLGFLNRFGAKVMSQVVHLGDTPHLDKLIGAVKTQLDLYSEGKLSAVYIAYTRFVNTMKQEAVIEQLLPLSSDHFEADDGTPATSWDYIYEPDAQAVVDELLVRYVEALVYQAVAENMASEQSARMVAMKAASDNAKTVISELQLVYNKSRQAAITKELSEIVGGAAAV.

This sequence belongs to the ATPase gamma chain family. F-type ATPases have 2 components, CF(1) - the catalytic core - and CF(0) - the membrane proton channel. CF(1) has five subunits: alpha(3), beta(3), gamma(1), delta(1), epsilon(1). CF(0) has three main subunits: a, b and c.

The protein resides in the cell inner membrane. Produces ATP from ADP in the presence of a proton gradient across the membrane. The gamma chain is believed to be important in regulating ATPase activity and the flow of protons through the CF(0) complex. The protein is ATP synthase gamma chain of Burkholderia cenocepacia (strain ATCC BAA-245 / DSM 16553 / LMG 16656 / NCTC 13227 / J2315 / CF5610) (Burkholderia cepacia (strain J2315)).